The primary structure comprises 21 residues: Venom peptide Ocy4 (21 aa).

As to expression, expressed by the venom gland.

It is found in the secreted. The protein is Venom peptide Ocy4 of Opisthacanthus cayaporum (South American scorpion).